Here is a 148-residue protein sequence, read N- to C-terminus: Nucleoside diphosphate kinase (148 aa).

ATP contacts are provided by Lys9, Phe57, Arg85, Thr91, Arg102, and Asn112. Thr91 is subject to Phosphothreonine. The active-site Pros-phosphohistidine intermediate is His115. Ser122 carries the post-translational modification Phosphoserine.

This sequence belongs to the NDK family. In terms of assembly, homotetramer. Mg(2+) is required as a cofactor.

The protein resides in the cytoplasm. The catalysed reaction is a 2'-deoxyribonucleoside 5'-diphosphate + ATP = a 2'-deoxyribonucleoside 5'-triphosphate + ADP. It carries out the reaction a ribonucleoside 5'-diphosphate + ATP = a ribonucleoside 5'-triphosphate + ADP. Functionally, major role in the synthesis of nucleoside triphosphates other than ATP. The ATP gamma phosphate is transferred to the NDP beta phosphate via a ping-pong mechanism, using a phosphorylated active-site intermediate. This chain is Nucleoside diphosphate kinase, found in Oceanobacillus iheyensis (strain DSM 14371 / CIP 107618 / JCM 11309 / KCTC 3954 / HTE831).